A 333-amino-acid chain; its full sequence is HTH-type transcriptional repressor PurR (333 aa).

The HTH lacI-type domain maps to 2 to 56; the sequence is ATIKDVAKLASVSTTTVSHVINKTRFVAEATQKRVWEAVEELNYAPSAVARSLKC. The H-T-H motif DNA-binding region spans 4 to 23; the sequence is IKDVAKLASVSTTTVSHVIN. The DNA-binding element occupies 48-56; it reads SAVARSLKC. Residues Phe73, Lys189, Thr191, Phe220, and Asp274 each contribute to the hypoxanthine site.

As to quaternary structure, homodimer.

It functions in the pathway purine metabolism; purine nucleotide biosynthesis [regulation]. Functionally, is the main repressor of the genes involved in the de novo synthesis of purine nucleotides, regulating purB, purC, purEK, purF, purHD, purL, purMN and guaBA expression. PurR is allosterically activated to bind its cognate DNA by binding the purine corepressors, hypoxanthine or guanine, thereby effecting transcription repression. In Aliivibrio salmonicida (strain LFI1238) (Vibrio salmonicida (strain LFI1238)), this protein is HTH-type transcriptional repressor PurR.